The chain runs to 1356 residues: Partitioning defective 3 homolog (1356 aa).

Phosphoserine is present on Ser25. Disordered stretches follow at residues 81–100 and 154–262; these read EQDP…GTQS and SVSD…GLEH. The residue at position 91 (Thr91) is a Phosphothreonine. Low complexity predominate over residues 91–100; sequence TSASSTGTQS. Composition is skewed to polar residues over residues 154-163 and 171-187; these read SVSDSNFSSE and TRWS…TAGS. 2 positions are modified to phosphoserine: Ser156 and Ser174. Over residues 190 to 203 the composition is skewed to basic and acidic residues; the sequence is TCDRKKDENYRSLP. Positions 204–224 are enriched in polar residues; sequence RDTSNWSNQFQRDNARSSLSA. Positions 246–260 are enriched in basic and acidic residues; the sequence is DNSRVEPVGHADTGL. A PDZ 1 domain is found at 271–359; it reads MVKLVEVPND…TPIIWFHVVP (89 aa). Ser383 carries the phosphoserine modification. Residues 408–448 are disordered; sequence LNHPPEQIDSHSRLPHSAHPSGKPPSAPASAPQNVFSTTVS. PDZ domains are found at residues 461–546 and 590–677; these read NIQL…LVFR and EVPL…GMIQ. A Phosphotyrosine modification is found at Tyr489. Ser692, Ser695, Ser715, Ser728, Ala792, Ser809, and Ser827 each carry phosphoserine. Residues 712-936 are interaction with PRKCI and PRKCZ; it reads RRISHSLYSG…AAIDKSYDKP (225 aa). Residue Lys834 is modified to N6-acetyllysine. Ser837 carries the phosphoserine modification. An N6-acetyllysine modification is found at Lys851. Phosphoserine occurs at positions 852 and 873. 2 disordered regions span residues 865-886 and 932-1025; these read TVDD…GLKK and SYDK…DMFR. Lys885 is modified (N6-acetyllysine). An interaction with FRMD4A region spans residues 935 to 1356; the sequence is KPAVDDDDEG…TPEKGRPFYS (422 aa). The span at 939-953 shows a compositional bias: acidic residues; that stretch reads DDDDEGMETLEEDTE. Ser962 is modified (phosphoserine; by AURKA). Over residues 968-982 the composition is skewed to polar residues; sequence DQPSHSLERQMNGNQ. Phosphoserine occurs at positions 971 and 973. Residues 983 to 1009 show a composition bias toward basic and acidic residues; sequence EKGDKTDRKKDKTGKEKKKDRDKEKDK. Position 1046 is a phosphoserine (Ser1046). Residues 1049-1077 are a coiled coil; the sequence is SEEERIRMKQEQERIQAKTREFRERQARE. The disordered stretch occupies residues 1129–1356; it reads QVKKPRNSKP…TPEKGRPFYS (228 aa). The segment covering 1136–1149 has biased composition (polar residues); the sequence is SKPSPVDSNRSTPS. Positions 1150 to 1177 are enriched in basic and acidic residues; sequence NHDRIQRLRQEFQQAKQDEDVEDRRRTY. 3 coiled-coil regions span residues 1151–1174, 1201–1224, and 1280–1301; these read HDRI…EDRR, VQMQ…YSSL, and MLET…MKKQ. The segment covering 1196 to 1205 has biased composition (low complexity); that stretch reads SVSVEVQMQR. Residues 1221-1245 show a composition bias toward polar residues; sequence YSSLPRQSRKNASSVSQDSWEQNYS. Basic and acidic residues predominate over residues 1285–1298; the sequence is ELLRQEQRRKEQQM. The span at 1337–1346 shows a compositional bias: polar residues; the sequence is SQVARLNRLQ. Residues 1347–1356 are compositionally biased toward basic and acidic residues; it reads TPEKGRPFYS. Lys1350 carries the post-translational modification N6-acetyllysine.

This sequence belongs to the PAR3 family. As to quaternary structure, interacts (via PDZ 1 domain) with F11R/JAM1, PARD6A and PARD6B. Interacts with PRCKI and CDH5. Interacts (via PDZ 3 domain) with PTEN (via C-terminus). Part of a complex with PARD6A or PARD6B, PRKCI or PRKCZ and CDC42 or RAC1. Component of a complex whose core is composed of ARHGAP17, AMOT, PALS1, PATJ and PARD3/PAR3. Interacts with LIMK2, AURKA and AURKB. Component of the Par polarity complex, composed of at least phosphorylated PRKCZ, PARD3 and TIAM1. Directly interacts with TIAM1 and TIAM2. Interacts with ECT2, FBF1 and SIRT2. Interacts (via coiled-coil domain) with FRMD4A. Found in a complex with PARD3, CYTH1 and FRMD4A. Interacts with SAPCD2. Interacts with PRKCA. Interacts with PRKCZ. In terms of processing, acetylated. Deacetylated by SIRT2, thereby inhibiting Schwann cell peripheral myelination. Phosphorylation at Ser-827 by PRKCZ and PRKCI occurs at the most apical tip of epithelial cell-cell contacts during the initial phase of tight junction formation and may promote dissociation of the complex with PARD6. EGF-induced Tyr-1127 phosphorylation mediates dissociation from LIMK2. Phosphorylation by AURKA at Ser-962 is required for the normal establishment of neuronal polarity. In terms of tissue distribution, widely expressed.

The protein resides in the cytoplasm. The protein localises to the endomembrane system. Its subcellular location is the cell junction. It is found in the tight junction. It localises to the adherens junction. The protein resides in the cell membrane. The protein localises to the cell cortex. Its subcellular location is the cytoskeleton. Its function is as follows. Adapter protein involved in asymmetrical cell division and cell polarization processes. Seems to play a central role in the formation of epithelial tight junctions. Targets the phosphatase PTEN to cell junctions. Involved in Schwann cell peripheral myelination. Association with PARD6B may prevent the interaction of PARD3 with F11R/JAM1, thereby preventing tight junction assembly. The PARD6-PARD3 complex links GTP-bound Rho small GTPases to atypical protein kinase C proteins. Required for establishment of neuronal polarity and normal axon formation in cultured hippocampal neurons. This chain is Partitioning defective 3 homolog, found in Homo sapiens (Human).